A 293-amino-acid chain; its full sequence is Urease accessory protein UreD (293 aa).

It belongs to the UreD family. As to quaternary structure, ureD, UreF and UreG form a complex that acts as a GTP-hydrolysis-dependent molecular chaperone, activating the urease apoprotein by helping to assemble the nickel containing metallocenter of UreC. The UreE protein probably delivers the nickel.

It localises to the cytoplasm. Functionally, required for maturation of urease via the functional incorporation of the urease nickel metallocenter. The polypeptide is Urease accessory protein UreD (Cupriavidus metallidurans (strain ATCC 43123 / DSM 2839 / NBRC 102507 / CH34) (Ralstonia metallidurans)).